A 341-amino-acid chain; its full sequence is Cathepsin B-like cysteine proteinase 1 (341 aa).

An N-terminal signal peptide occupies residues 1–19 (MKYLFFALCLYLYQGISEA). Residues 20 to 88 (EVPAEQIPLE…VEDEELEENN (69 aa)) constitute a propeptide, activation peptide. Asn-103 carries N-linked (GlcNAc...) asparagine glycosylation. Disulfide bonds link Cys-104–Cys-133, Cys-116–Cys-160, Cys-152–Cys-218, Cys-153–Cys-156, Cys-189–Cys-222, and Cys-197–Cys-209. Cys-119 is a catalytic residue. N-linked (GlcNAc...) asparagine glycosylation is present at Asn-202. Residues His-288 and Asn-308 contribute to the active site.

The protein belongs to the peptidase C1 family.

Functionally, expression of the protease correlates with blood-feeding and suggests a role for the protease in blood digestion. The sequence is that of Cathepsin B-like cysteine proteinase 1 (CP-1) from Ostertagia ostertagi (Brown stomach worm).